A 385-amino-acid chain; its full sequence is 8-amino-7-oxononanoate synthase (385 aa).

Residue Arg21 participates in substrate binding. Pyridoxal 5'-phosphate is bound at residue 108–109 (GF). His133 contributes to the substrate binding site. Pyridoxal 5'-phosphate-binding residues include Ser179, His207, and Thr233. Lys236 carries the post-translational modification N6-(pyridoxal phosphate)lysine. Thr352 is a binding site for substrate.

Belongs to the class-II pyridoxal-phosphate-dependent aminotransferase family. BioF subfamily. Homodimer. The cofactor is pyridoxal 5'-phosphate.

The enzyme catalyses 6-carboxyhexanoyl-[ACP] + L-alanine + H(+) = (8S)-8-amino-7-oxononanoate + holo-[ACP] + CO2. It participates in cofactor biosynthesis; biotin biosynthesis. Catalyzes the decarboxylative condensation of pimeloyl-[acyl-carrier protein] and L-alanine to produce 8-amino-7-oxononanoate (AON), [acyl-carrier protein], and carbon dioxide. This is 8-amino-7-oxononanoate synthase from Salmonella typhimurium (strain LT2 / SGSC1412 / ATCC 700720).